The following is a 291-amino-acid chain: Ribosomal protein L11 methyltransferase (291 aa).

Positions 136, 159, 181, and 228 each coordinate S-adenosyl-L-methionine.

The protein belongs to the methyltransferase superfamily. PrmA family.

It is found in the cytoplasm. The catalysed reaction is L-lysyl-[protein] + 3 S-adenosyl-L-methionine = N(6),N(6),N(6)-trimethyl-L-lysyl-[protein] + 3 S-adenosyl-L-homocysteine + 3 H(+). Its function is as follows. Methylates ribosomal protein L11. The polypeptide is Ribosomal protein L11 methyltransferase (Sinorhizobium fredii (strain NBRC 101917 / NGR234)).